The primary structure comprises 1675 residues: Coadhesin (1675 aa).

The Extracellular portion of the chain corresponds to 1 to 1356 (QGNYYSYGGT…TIADQADAAK (1356 aa)). Positions 11-160 (TPGTPIGCTN…ICMRVGVESC (150 aa)) constitute an F5/8 type C 1 domain. TSP type-1 domains lie at 168–220 (NGAW…NDCV), 224–279 (NGGW…QFCP), 281–336 (DGGW…QCCP), 338–393 (HGGW…QTCP), 403–458 (NGNY…IPCP), 460–515 (NGNW…TACP), and 517–572 (DGGW…GPCP). Intrachain disulfides connect cysteine 180/cysteine 216, cysteine 184/cysteine 219, cysteine 194/cysteine 206, cysteine 236/cysteine 273, cysteine 240/cysteine 278, cysteine 251/cysteine 263, cysteine 293/cysteine 330, cysteine 297/cysteine 335, cysteine 308/cysteine 320, cysteine 350/cysteine 387, cysteine 354/cysteine 392, cysteine 365/cysteine 377, cysteine 415/cysteine 452, cysteine 419/cysteine 457, cysteine 430/cysteine 442, cysteine 472/cysteine 509, cysteine 476/cysteine 514, cysteine 487/cysteine 499, cysteine 528/cysteine 566, cysteine 532/cysteine 571, and cysteine 543/cysteine 555. A disordered region spans residues 567-588 (NKGPCPTSPPTISPPTTGSPAD). VWFA domains lie at 595–769 (DLVF…MDRI), 778–958 (DIGF…FKAL), and 966–1141 (DLTF…ISII). Residues 1144–1198 (PSGLSKWSSWSACSKTCRYLGKAGTQIRTRDCKIPELGCDGMRIDTVECNKMDCE) enclose the TSP type-1 8 domain. Intrachain disulfides connect cysteine 1156–cysteine 1192, cysteine 1160–cysteine 1197, and cysteine 1175–cysteine 1182. The F5/8 type C 2 domain occupies 1192–1336 (CNKMDCEGCG…PCMQAAVFGC (145 aa)). A helical membrane pass occupies residues 1357-1377 (GILIVLWILAGILTFLLLMAC). At 1378-1675 (CYYCCWHVCC…RGEEWYSRWG (298 aa)) the chain is on the cytoplasmic side. The span at 1463–1480 (EKHVTAEDVKSEKPKYSE) shows a compositional bias: basic and acidic residues. Residues 1463–1491 (EKHVTAEDVKSEKPKYSEEASSGTIKSGS) form a disordered region. Polar residues predominate over residues 1481 to 1491 (EASSGTIKSGS).

As to expression, component of the acid-insoluble and acid-soluble organic matrix of the aragonitic skeleton (at protein level).

It is found in the membrane. This Acropora millepora (Staghorn coral) protein is Coadhesin.